The following is a 1186-amino-acid chain: Pumilio homolog 1 (1186 aa).

N-acetylserine is present on Ser-2. Residue Ser-19 is modified to Phosphoserine. The tract at residues 22 to 73 (LKHHPQEPANPNMPVVLTSGTGSQAQPQPAANQALAAGTHSSPVPGSIGVAG) is disordered. Residues 45-58 (QAQPQPAANQALAA) show a composition bias toward low complexity. Phosphoserine is present on residues Ser-75, Ser-98, and Ser-106. Thr-112 is modified (phosphothreonine). Ser-124, Ser-159, Ser-197, Ser-209, and Ser-229 each carry phosphoserine. The tract at residues 233–272 (SCLRKGGFGPRDADSDENDKGEKKNKGTFDGDKLGDLKEE) is disordered. The segment covering 250 to 272 (NDKGEKKNKGTFDGDKLGDLKEE) has biased composition (basic and acidic residues). Ser-305 carries the post-translational modification Phosphoserine. The span at 485–502 (TNSANQQTTPQAQQGQQQ) shows a compositional bias: low complexity. Disordered stretches follow at residues 485 to 524 (TNSANQQTTPQAQQGQQQVLRGGASQRPLTPNQNQQGQQT) and 613 to 648 (AGTTNGPFRPLGTQQPQPQPQQQPNNNLASSSFYGN). Positions 511–524 (RPLTPNQNQQGQQT) are enriched in polar residues. Residue Thr-514 is modified to Phosphothreonine. The span at 626-639 (QQPQPQPQQQPNNN) shows a compositional bias: low complexity. Phosphoserine occurs at positions 709 and 714. Positions 742 to 775 (GPVGMPLPSQGPGHSQTPPPSLSSHGSSSSLNLG) are disordered. Positions 763–775 (LSSHGSSSSLNLG) are enriched in low complexity. Residue Arg-796 is modified to Omega-N-methylarginine. Phosphoserine occurs at positions 806 and 822. The PUM-HD domain occupies 828–1168 (GRSRLLEDFR…HILAKLEKYY (341 aa)). 8 Pumilio repeats span residues 848 to 883 (EIAGHIMEFSQDQHGSRFIQLKLERATPAERQLVFN), 884 to 919 (EILQAAYQLMVDVFGNYVIQKFFEFGSLEQKLALAE), 920 to 955 (RIRGHVLSLALQMYGCRVIQKALEFIPSDQQNEMVR), 956 to 991 (ELDGHVLKCVKDQNGNHVVQKCIECVQPQSLQFIID), 992 to 1027 (AFKGQVFALSTHPYGCRVIQRILEHCLPDQTLPILE), 1028 to 1063 (ELHQHTEQLVQDQYGNYVIQHVLEHGRPEDKSKIVA), 1064 to 1099 (EIRGNVLVLSQHKFASNVVEKCVTHASRTERAVLID), and 1103 to 1142 (TMNDGPHSALYTMMKDQYANYVVQKMIDVAEPGQRKIVMH). Positions 863 to 867 (SRFIQ) are adenine-nucleotide binding in RNA target. The tract at residues 899–903 (NYVIQ) is uracil-nucleotide binding in RNA target. An adenine-nucleotide binding in RNA target region spans residues 935-939 (CRVIQ). The segment at 971–975 (NHVVQ) is non-specific-nucleotide binding in RNA target. Residues 1007–1011 (CRVIQ) form an adenine-nucleotide binding in RNA target region. Residues 1043–1047 (NYVIQ) form a uracil-nucleotide binding in RNA target region. Guanine-nucleotide binding in RNA target stretches follow at residues 1079–1083 (SNVVE) and 1080–1083 (NVVE). The tract at residues 1122-1126 (NYVVQ) is uracil-nucleotide binding in RNA target.

In terms of assembly, recruits the CCR4-POP2-NOT deadenylase leading to translational inhibition and mRNA degradation. Interacts with TRIM71 (via NHL repeats) in an RNA-dependent manner. In terms of processing, phosphorylation at Ser-714 promotes RNA-binding activity. Following growth factor stimulation phosphorylated at Ser-714, promoting binding to the 3'-UTR of CDKN1B/p27 mRNA.

It is found in the cytoplasm. It localises to the P-body. Its subcellular location is the cytoplasmic granule. Functionally, sequence-specific RNA-binding protein that acts as a post-transcriptional repressor by binding the 3'-UTR of mRNA targets. Binds to an RNA consensus sequence, the Pumilio Response Element (PRE), 5'-UGUANAUA-3', that is related to the Nanos Response Element (NRE). Mediates post-transcriptional repression of transcripts via different mechanisms: acts via direct recruitment of the CCR4-POP2-NOT deadenylase leading to translational inhibition and mRNA degradation. Also mediates deadenylation-independent repression by promoting accessibility of miRNAs. Following growth factor stimulation, phosphorylated and binds to the 3'-UTR of CDKN1B/p27 mRNA, inducing a local conformational change that exposes miRNA-binding sites, promoting association of miR-221 and miR-222, efficient suppression of CDKN1B/p27 expression, and rapid entry to the cell cycle. Acts as a post-transcriptional repressor of E2F3 mRNAs by binding to its 3'-UTR and facilitating miRNA regulation. Represses a program of genes necessary to maintain genomic stability such as key mitotic, DNA repair and DNA replication factors. Its ability to repress those target mRNAs is regulated by the lncRNA NORAD (non-coding RNA activated by DNA damage) which, due to its high abundance and multitude of PUMILIO binding sites, is able to sequester a significant fraction of PUM1 and PUM2 in the cytoplasm. Involved in neuronal functions by regulating ATXN1 mRNA levels: acts by binding to the 3'-UTR of ATXN1 transcripts, leading to their down-regulation independently of the miRNA machinery. Plays a role in cytoplasmic sensing of viral infection. In testis, acts as a post-transcriptional regulator of spermatogenesis by binding to the 3'-UTR of mRNAs coding for regulators of p53/TP53. Involved in embryonic stem cell renewal by facilitating the exit from the ground state: acts by targeting mRNAs coding for naive pluripotency transcription factors and accelerates their down-regulation at the onset of differentiation. Binds specifically to miRNA MIR199A precursor, with PUM2, regulates miRNA MIR199A expression at a postranscriptional level. In Pongo abelii (Sumatran orangutan), this protein is Pumilio homolog 1 (PUM1).